We begin with the raw amino-acid sequence, 57 residues long: Andropin (57 aa).

The first 23 residues, 1–23 (MKYFVVLVVLALILAITVGPSDA), serve as a signal peptide directing secretion.

This sequence belongs to the andropin family. Ejaculatory duct of adult males.

It localises to the secreted. Its function is as follows. Male-specific peptide with moderate activity against Gram-positive bacteria. This Drosophila mauritiana (Fruit fly) protein is Andropin (Anp).